The sequence spans 541 residues: Arginine--tRNA ligase (541 aa).

The 'HIGH' region signature appears at 119–129 (ANPTGPLHIGH).

Belongs to the class-I aminoacyl-tRNA synthetase family. Monomer.

Its subcellular location is the cytoplasm. The enzyme catalyses tRNA(Arg) + L-arginine + ATP = L-arginyl-tRNA(Arg) + AMP + diphosphate. The polypeptide is Arginine--tRNA ligase (argS) (Helicobacter pylori (strain J99 / ATCC 700824) (Campylobacter pylori J99)).